Reading from the N-terminus, the 397-residue chain is Proteinase-activated receptor 2 (397 aa).

A signal peptide spans 1–25 (MRSLSLAWLLGGITLLAASASCNRT). Residue N23 is glycosylated (N-linked (GlcNAc...) asparagine). A propeptide spans 26–36 (VNAPGPNSKGR) (removed for receptor activation). Residues 37–71 (SLIGRLDTPPPITGKGAPVEPGFSVDEFSASVLTG) lie on the Extracellular side of the membrane. A helical membrane pass occupies residues 72–101 (KLTTVFLPVIYIIVFVIGLPSNGMALWVFF). The Cytoplasmic segment spans residues 102–108 (FRTKKKH). The chain crosses the membrane as a helical span at residues 109–137 (PAVIYMANLALADLLSVIWFPLKISYHLH). The Extracellular portion of the chain corresponds to 138–149 (GNDWTYGDALCK). C148 and C226 are disulfide-bonded. Residues 150-177 (VLIGFFYGNMYCSILFMTCLSVQRYWVI) form a helical membrane-spanning segment. Over 178–183 (VNPMGH) the chain is Cytoplasmic. The chain crosses the membrane as a helical span at residues 184–211 (SRKRANIAVGVSLAIWLLIFLVTIPLYV). The Extracellular portion of the chain corresponds to 212–235 (MRQTIYIPALNITTCHDVLPEEVL). Residue N222 is glycosylated (N-linked (GlcNAc...) asparagine). The helical transmembrane segment at 236–269 (VGDMFSYFLSLAIGVFLFPALLTASAYVLMIKTL) threads the bilayer. The Cytoplasmic portion of the chain corresponds to 270-277 (RSSAMDEH). A helical transmembrane segment spans residues 278–317 (SEKKRRRAIRLIITVLSMYFICFAPSNVLLVVHYFLIKSQ). The Extracellular segment spans residues 318–323 (RQSHVY). Residues 324–347 (ALYLVALCLSTLNSCIDPFVYYFV) form a helical membrane-spanning segment. At 348 to 397 (SKDFRDQARNALLCRSVRTVKRMQISLTSNKFSRKSSSYSSSSTSVKTSY) the chain is on the cytoplasmic side. The S-palmitoyl cysteine moiety is linked to residue C361.

It belongs to the G-protein coupled receptor 1 family. As to quaternary structure, interacts with TLR4, COPS5 and TMED2. Interacts with GNAQ, GNA11, GNA12, GNA13 and GNA14. Post-translationally, a proteolytic cleavage generates a new N-terminus that functions as a tethered ligand. Activating serine proteases include trypsin, mast cell tryptase, coagulation factors VII and Xa, myeloblastin/PRTN3 and membrane-type serine protease 1/ST14. Proposed subsequent cleavage by serine proteases is leading to receptor deactivation and include neutrophil elastase and cathepsin G. At least in part, implicated proteases are also shown to activate the receptor; the glycosylation status of the receptor is thought to contribute to the difference. N-glycosylated and sialylated. In terms of processing, multiple phosphorylated on serine and threonine residues in the cytoplasmic region upon receptor activation; required for receptor desensitization and recruitment of beta-arrestin. Post-translationally, monoubiquitinated by Cbl at the plasma membrane and in early endosomes; not required for receptor endocytosis but for translocation to late endosomes or lysosomes. Deubiquitination involves Stambp and Usp8; required for lysosomal trafficking and receptor degradation.

Its subcellular location is the cell membrane. In terms of biological role, receptor for trypsin and trypsin-like enzymes coupled to G proteins. Its function is mediated through the activation of several signaling pathways including phospholipase C (PLC), intracellular calcium, mitogen-activated protein kinase (MAPK), I-kappaB kinase/NF-kappaB and Rho. Can also be transactivated by cleaved F2R/PAR1. Involved in modulation of inflammatory responses and regulation of innate and adaptive immunity, and acts as a sensor for proteolytic enzymes generated during infection. Generally is promoting inflammation. Can signal synergistically with TLR4 and probably TLR2 in inflammatory responses and modulates Tlr3 signaling. Has a protective role in establishing the endothelial barrier; the activity involves coagulation factor X. Regulates endothelial cell barrier integrity during neutrophil extravasation, probably following proteolytic cleavage by PRTN3. Proposed to have a bronchoprotective role in airway epithelium, but also shown to compromise the airway epithelial barrier by interrupting E-cadherin adhesion. Involved in the regulation of vascular tone; activation results in hypotension presumably mediated by vasodilation. Associates with a subset of G proteins alpha subunits such as GNAQ, GNA11, GNA14, GNA12 and GNA13, but probably not with G(o)-alpha, G(i) subunit alpha-1 and G(i) subunit alpha-2. Believed to be a class B receptor which internalizes as a complex with arrestin and traffic with it to endosomal vesicles, presumably as desensitized receptor, for extended periods of time. Mediates inhibition of TNF-alpha stimulated JNK phosphorylation via coupling to G GNAQ and GNA11; the function involves dissociation of RIPK1 and Tradd from TNFR1. Mediates phosphorylation of nuclear factor NF-kappa-B RELA subunit at 'Ser-536'; the function involves Ikbkb and is predominantly independent of G proteins. Involved in cellular migration. Involved in cytoskeletal rearrangement and chemotaxis through beta-arrestin-promoted scaffolds; the function is independent of GNAQ and GNA11 and involves promotion of cofilin dephosphorylation and actin filament severing. Induces redistribution of COPS5 from the plasma membrane to the cytosol and activation of the JNK cascade is mediated by Cops5. Involved in the recruitment of leukocytes to the sites of inflammation and is the major PAR receptor capable of modulating eosinophil function such as pro-inflammatory cytokine secretion, superoxide production and degranulation. During inflammation promotes dendritic cell maturation, trafficking to the lymph nodes and subsequent T-cell activation. Involved in antimicrobial response of innate immune cells; activation enhances phagocytosis of Gram-positive and killing of Gram-negative bacteria. Acts synergistically with interferon-gamma in enhancing antiviral responses. Probably mediates activation of pro-inflammatory and pro-fibrotic responses in fibroblasts, triggered by coagulation factor Xa (F10). Probably mediates activation of barrier protective signaling responses in endothelial cells, triggered by coagulation factor Xa (F10). This is Proteinase-activated receptor 2 (F2rl1) from Rattus norvegicus (Rat).